Reading from the N-terminus, the 51-residue chain is Large ribosomal subunit protein bL32c (51 aa).

The protein belongs to the bacterial ribosomal protein bL32 family.

Its subcellular location is the plastid. The protein resides in the chloroplast. The polypeptide is Large ribosomal subunit protein bL32c (Oenothera elata subsp. hookeri (Hooker's evening primrose)).